The following is a 314-amino-acid chain: tRNA dimethylallyltransferase (314 aa).

Position 16–23 (16–23 (GPTGVGKT)) interacts with ATP. 18 to 23 (TGVGKT) lines the substrate pocket. The segment at 41–44 (DSMQ) is interaction with substrate tRNA.

Belongs to the IPP transferase family. Monomer. It depends on Mg(2+) as a cofactor.

It catalyses the reaction adenosine(37) in tRNA + dimethylallyl diphosphate = N(6)-dimethylallyladenosine(37) in tRNA + diphosphate. Its function is as follows. Catalyzes the transfer of a dimethylallyl group onto the adenine at position 37 in tRNAs that read codons beginning with uridine, leading to the formation of N6-(dimethylallyl)adenosine (i(6)A). In Desulfosudis oleivorans (strain DSM 6200 / JCM 39069 / Hxd3) (Desulfococcus oleovorans), this protein is tRNA dimethylallyltransferase.